The primary structure comprises 276 residues: Acyl-[acyl-carrier-protein]--UDP-N-acetylglucosamine O-acyltransferase (276 aa).

Belongs to the transferase hexapeptide repeat family. LpxA subfamily. In terms of assembly, homotrimer.

It is found in the cytoplasm. It catalyses the reaction a (3R)-hydroxyacyl-[ACP] + UDP-N-acetyl-alpha-D-glucosamine = a UDP-3-O-[(3R)-3-hydroxyacyl]-N-acetyl-alpha-D-glucosamine + holo-[ACP]. Its pathway is glycolipid biosynthesis; lipid IV(A) biosynthesis; lipid IV(A) from (3R)-3-hydroxytetradecanoyl-[acyl-carrier-protein] and UDP-N-acetyl-alpha-D-glucosamine: step 1/6. In terms of biological role, involved in the biosynthesis of lipid A, a phosphorylated glycolipid that anchors the lipopolysaccharide to the outer membrane of the cell. In Rippkaea orientalis (strain PCC 8801 / RF-1) (Cyanothece sp. (strain PCC 8801)), this protein is Acyl-[acyl-carrier-protein]--UDP-N-acetylglucosamine O-acyltransferase.